The primary structure comprises 290 residues: uncharacterized protein (290 aa).

This is an uncharacterized protein from Escherichia phage lambda (Bacteriophage lambda).